The sequence spans 932 residues: Isoleucine--tRNA ligase (932 aa).

The short motif at 58-68 (PYANGNLHLGH) is the 'HIGH' region element. Glu-567 is a binding site for L-isoleucyl-5'-AMP. Positions 608-612 (KMSKS) match the 'KMSKS' region motif. Residue Lys-611 participates in ATP binding. Positions 895, 898, 915, and 918 each coordinate Zn(2+).

It belongs to the class-I aminoacyl-tRNA synthetase family. IleS type 1 subfamily. In terms of assembly, monomer. Zn(2+) serves as cofactor.

It localises to the cytoplasm. It catalyses the reaction tRNA(Ile) + L-isoleucine + ATP = L-isoleucyl-tRNA(Ile) + AMP + diphosphate. Functionally, catalyzes the attachment of isoleucine to tRNA(Ile). As IleRS can inadvertently accommodate and process structurally similar amino acids such as valine, to avoid such errors it has two additional distinct tRNA(Ile)-dependent editing activities. One activity is designated as 'pretransfer' editing and involves the hydrolysis of activated Val-AMP. The other activity is designated 'posttransfer' editing and involves deacylation of mischarged Val-tRNA(Ile). This Azoarcus sp. (strain BH72) protein is Isoleucine--tRNA ligase.